The following is an 87-amino-acid chain: uncharacterized protein (87 aa).

A helical membrane pass occupies residues 21-41 (LSSSLYSVAFFLFFFPNFLFF).

Its subcellular location is the membrane. This is an uncharacterized protein from Saccharomyces cerevisiae (strain ATCC 204508 / S288c) (Baker's yeast).